Here is a 373-residue protein sequence, read N- to C-terminus: Phosphoserine aminotransferase (373 aa).

Residue arginine 41 coordinates L-glutamate. Residues 75-76 (GT), tryptophan 101, threonine 152, aspartate 172, and glutamine 195 contribute to the pyridoxal 5'-phosphate site. N6-(pyridoxal phosphate)lysine is present on lysine 196. Position 236-237 (236-237 (NT)) interacts with pyridoxal 5'-phosphate.

It belongs to the class-V pyridoxal-phosphate-dependent aminotransferase family. SerC subfamily. As to quaternary structure, homodimer. Requires pyridoxal 5'-phosphate as cofactor.

Its subcellular location is the cytoplasm. The catalysed reaction is O-phospho-L-serine + 2-oxoglutarate = 3-phosphooxypyruvate + L-glutamate. It carries out the reaction 4-(phosphooxy)-L-threonine + 2-oxoglutarate = (R)-3-hydroxy-2-oxo-4-phosphooxybutanoate + L-glutamate. Its pathway is amino-acid biosynthesis; L-serine biosynthesis; L-serine from 3-phospho-D-glycerate: step 2/3. Its function is as follows. Catalyzes the reversible conversion of 3-phosphohydroxypyruvate to phosphoserine and of 3-hydroxy-2-oxo-4-phosphonooxybutanoate to phosphohydroxythreonine. In Lactobacillus helveticus (strain DPC 4571), this protein is Phosphoserine aminotransferase.